Reading from the N-terminus, the 265-residue chain is Speedy protein E12 (265 aa).

The segment at 1 to 80 (MGQILGKIMM…EPEKELAPEP (80 aa)) is disordered. The segment covering 13 to 23 (QPQPQEEQSPQ) has biased composition (low complexity). Residues 66–80 (DESDDEPEKELAPEP) are compositionally biased toward acidic residues.

It belongs to the Speedy/Ringo family.

The polypeptide is Speedy protein E12 (Homo sapiens (Human)).